We begin with the raw amino-acid sequence, 471 residues long: N(6)-adenine-specific methyltransferase METTL4 (471 aa).

Belongs to the MT-A70-like family.

Its subcellular location is the nucleus. It carries out the reaction a 2'-O-methyladenosine in U2 snRNA + S-adenosyl-L-methionine = an N(6)-methyl-2'-O-methyladenosine in U2 snRNA + S-adenosyl-L-homocysteine + H(+). It catalyses the reaction a 2'-deoxyadenosine in DNA + S-adenosyl-L-methionine = an N(6)-methyl-2'-deoxyadenosine in DNA + S-adenosyl-L-homocysteine + H(+). Functionally, n(6)-adenine-specific methyltransferase that can methylate both RNAs and DNA. Acts as a N(6)-adenine-specific RNA methyltransferase by catalyzing formation of N6,2'-O-dimethyladenosine (m6A(m)) on internal positions of U2 small nuclear RNA (snRNA): methylates the 6th position of adenine residues with a pre-deposited 2'-O-methylation. Internal m6A(m) methylation of snRNAs regulates RNA splicing. Also able to act as a N(6)-adenine-specific DNA methyltransferase by mediating methylation of DNA on the 6th position of adenine (N(6)-methyladenosine). The existence of N(6)-methyladenosine (m6A) on DNA is however unclear in mammals, and additional evidences are required to confirm the role of the N(6)-adenine-specific DNA methyltransferase activity of METTL4 in vivo. Acts as a regulator of mitochondrial transcript levels and mitochondrial DNA (mtDNA) copy number by mediating mtDNA N(6)-methylation: m6A on mtDNA reduces transcription by repressing TFAM DNA-binding and bending. N(6)-methyladenosine deposition by METTL4 regulates Polycomb silencing by triggering ubiquitination and degradation of sensor proteins ASXL1 and MPND, leading to inactivation of the PR-DUB complex and subsequent preservation of Polycomb silencing. In Mus musculus (Mouse), this protein is N(6)-adenine-specific methyltransferase METTL4.